Consider the following 219-residue polypeptide: Uracil phosphoribosyltransferase 1 (219 aa).

GTP-binding positions include Arg-33, Arg-42, and 76 to 79 (DGRI). Arg-86 contacts 5-phospho-alpha-D-ribose 1-diphosphate. Residue Arg-103 participates in GTP binding. A 5-phospho-alpha-D-ribose 1-diphosphate-binding site is contributed by Arg-111. Arg-132 is a binding site for GTP. 5-phospho-alpha-D-ribose 1-diphosphate-binding positions include Asp-138 and 138-146 (DPMLATGGS). Tyr-202 is a binding site for D-ribose 5-phosphate. Uracil-binding positions include Ile-203 and 208-210 (GDF). Asp-209 lines the 5-phospho-alpha-D-ribose 1-diphosphate pocket.

The protein belongs to the UPRTase family. Mg(2+) serves as cofactor.

The catalysed reaction is UMP + diphosphate = 5-phospho-alpha-D-ribose 1-diphosphate + uracil. Its pathway is pyrimidine metabolism; UMP biosynthesis via salvage pathway; UMP from uracil: step 1/1. Allosterically activated by GTP. Functionally, catalyzes the conversion of uracil and 5-phospho-alpha-D-ribose 1-diphosphate (PRPP) to UMP and diphosphate. This chain is Uracil phosphoribosyltransferase 1, found in Schizosaccharomyces pombe (strain 972 / ATCC 24843) (Fission yeast).